The following is a 695-amino-acid chain: Nucleoprotein (695 aa).

Coiled-coil stretches lie at residues 316 to 341 and 372 to 400; these read VNVG…RRHE and QTLA…EDQG. Disordered stretches follow at residues 426–458 and 472–611; these read RSIN…SFVD and TLEN…EDTR. Residues 474 to 484 are compositionally biased toward polar residues; the sequence is ENSVMAPSTTL. Residues 502–516 show a composition bias toward basic and acidic residues; that stretch reads ISQKKQGNESTDPAR. Over residues 529–547 the composition is skewed to acidic residues; it reads QEDDESEYTTDSQESDDQP. A PTAP/PSAP motif motif is present at residues 603-606; it reads PSAP.

It belongs to the filoviruses nucleoprotein family. In terms of assembly, homooligomer. Homomultimerizes to form the nucleocapsid. Binds to viral genomic RNA. Interacts with VP35 and VP30 to form the nucleocapsid. Also interacts with VP24 and VP40. In terms of processing, phosphorylated.

The protein resides in the virion. It localises to the host cytoplasm. In terms of biological role, encapsidates the genome, protecting it from nucleases. The encapsidated genomic RNA is termed the nucleocapsid and serves as template for transcription and replication. During replication, encapsidation by NP is coupled to RNA synthesis and all replicative products are resistant to nucleases. The chain is Nucleoprotein (NP) from Lake Victoria marburgvirus (strain Ravn-87) (MARV).